Here is a 521-residue protein sequence, read N- to C-terminus: U4/U6 small nuclear ribonucleoprotein Prp4 (521 aa).

At lysine 26 the chain carries N6-acetyllysine. WD repeat units follow at residues 229–268 (DDRP…LHTL), 271–318 (HNTN…VADI), 321–360 (HTVR…ILHQ), 363–402 (HSMG…IMFL), 405–444 (HLKE…VYTI), 447–487 (HQNL…LKTL), and 490–521 (HEGK…WMAE).

In terms of assembly, component of the precatalytic spliceosome (spliceosome B complex). Component of the U4/U6-U5 tri-snRNP complex, a building block of the precatalytic spliceosome (spliceosome B complex). The U4/U6-U5 tri-snRNP complex is composed of the U4, U6 and U5 snRNAs and at least PRPF3, PRPF4, PRPF6, PRPF8, PRPF31, SNRNP200, TXNL4A, SNRNP40, SNRPB, SNRPD1, SNRPD2, SNRPD3, SNRPE, SNRPF, SNRPG, DDX23, CD2BP2, PPIH, SNU13, EFTUD2, SART1 and USP39, plus LSM2, LSM3, LSM4, LSM5, LSM6, LSM7 and LSM8. Interacts directly with PRPF18, PPIH and PRPF3. Part of a heteromeric complex containing PPIH, PRPF3 and PRPF4 that is stable in the absence of RNA. Interacts with ERCC6.

It is found in the nucleus. Its subcellular location is the nucleus speckle. In terms of biological role, plays a role in pre-mRNA splicing as component of the U4/U6-U5 tri-snRNP complex that is involved in spliceosome assembly, and as component of the precatalytic spliceosome (spliceosome B complex). This chain is U4/U6 small nuclear ribonucleoprotein Prp4 (PRPF4), found in Bos taurus (Bovine).